The chain runs to 92 residues: Small ribosomal subunit protein uS17 (92 aa).

It belongs to the universal ribosomal protein uS17 family. In terms of assembly, part of the 30S ribosomal subunit.

One of the primary rRNA binding proteins, it binds specifically to the 5'-end of 16S ribosomal RNA. The polypeptide is Small ribosomal subunit protein uS17 (Wigglesworthia glossinidia brevipalpis).